The sequence spans 266 residues: Norfluorocurarine synthase 1 (266 aa).

The region spanning 11–121 (HFVLVHGAGH…VMPDAVNPPS (111 aa)) is the AB hydrolase-1 domain. Active-site residues include Ser-86, Asp-216, and His-244.

The protein belongs to the AB hydrolase superfamily. As to quaternary structure, homodimer.

It carries out the reaction 17-dehydropreakuammicine + H2O = norfluorocurarine + methanol + CO2. Its pathway is alkaloid biosynthesis. Hydrolase involved in the biosynthesis of curare monoterpene indole alkaloids (MIAs), natural products such as diaboline, a pharmacologically active compound used to regulate blood pressure. Curare alkaloids act as animal glycine receptor antagonists. Catalyzes the conversion of dehydropreakuammicine to norfluorocurarine. In Strychnos sp, this protein is Norfluorocurarine synthase 1.